Reading from the N-terminus, the 263-residue chain is tRNA (guanine-N(7)-)-methyltransferase (263 aa).

Positions 1–10 (MLPQDPSTEP) are enriched in polar residues. The tract at residues 1–38 (MLPQDPSTEPTPADDAAPVDSAGQASAPSPADPEGVAH) is disordered. S-adenosyl-L-methionine is bound by residues E91, E116, D143, and D166. D166 is a catalytic residue. Residue K170 coordinates substrate. The tract at residues 172–177 (RHNKRR) is interaction with RNA. Substrate-binding positions include D202 and 240-243 (TKFE).

The protein belongs to the class I-like SAM-binding methyltransferase superfamily. TrmB family.

It catalyses the reaction guanosine(46) in tRNA + S-adenosyl-L-methionine = N(7)-methylguanosine(46) in tRNA + S-adenosyl-L-homocysteine. Its pathway is tRNA modification; N(7)-methylguanine-tRNA biosynthesis. Catalyzes the formation of N(7)-methylguanine at position 46 (m7G46) in tRNA. This Cupriavidus necator (strain ATCC 17699 / DSM 428 / KCTC 22496 / NCIMB 10442 / H16 / Stanier 337) (Ralstonia eutropha) protein is tRNA (guanine-N(7)-)-methyltransferase.